A 316-amino-acid chain; its full sequence is HPr kinase/phosphorylase (316 aa).

Residues His143 and Lys164 contribute to the active site. 158–165 is a binding site for ATP; the sequence is GEAGSGKS. Ser165 contributes to the Mg(2+) binding site. Residue Asp182 is the Proton acceptor; for phosphorylation activity. Proton donor; for dephosphorylation activity of the active site. Residues 206 to 215 form an important for the catalytic mechanism of both phosphorylation and dephosphorylation region; that stretch reads LEVRGLGVLN. Glu207 contributes to the Mg(2+) binding site. Residue Arg251 is part of the active site. Residues 272–277 are important for the catalytic mechanism of dephosphorylation; sequence PVMPGR.

Belongs to the HPrK/P family. As to quaternary structure, homohexamer. Mg(2+) serves as cofactor.

The enzyme catalyses [HPr protein]-L-serine + ATP = [HPr protein]-O-phospho-L-serine + ADP + H(+). It catalyses the reaction [HPr protein]-O-phospho-L-serine + phosphate + H(+) = [HPr protein]-L-serine + diphosphate. Its function is as follows. Catalyzes the ATP- as well as the pyrophosphate-dependent phosphorylation of a specific serine residue in HPr, a phosphocarrier protein of the phosphoenolpyruvate-dependent sugar phosphotransferase system (PTS). HprK/P also catalyzes the pyrophosphate-producing, inorganic phosphate-dependent dephosphorylation (phosphorolysis) of seryl-phosphorylated HPr (P-Ser-HPr). The protein is HPr kinase/phosphorylase of Xanthomonas euvesicatoria pv. vesicatoria (strain 85-10) (Xanthomonas campestris pv. vesicatoria).